We begin with the raw amino-acid sequence, 252 residues long: Outer kinetochore KNL1 complex subunit ZWINT (252 aa).

The segment at 80 to 99 (QSPDALASEDASRQKATETK) is disordered. The segment covering 89–99 (DASRQKATETK) has biased composition (basic and acidic residues). Positions 120–221 (LSEALPQVKE…QRNQSYLQLL (102 aa)) form a coiled coil. Phosphoserine is present on residues serine 216 and serine 249.

As to quaternary structure, component of the KNL1 complex composed of KNL1 and ZWINT. Part of the ten-subunit outer kinetochore KMN network that includes the KNL1, MIS12 and NDC80 complexes; a bioriented kinetochore contains approximately 150 copies of the network. Interacts with the MIS12 complex subunits MIS12 DSN1, and PMF1. Interacts with the NDC80 complex subunit NDC80 during mitosis. Interacts with ZW10. Interacts with CETN3.

The protein resides in the nucleus. Its subcellular location is the chromosome. It is found in the centromere. The protein localises to the kinetochore. Acts as a component of the outer kinetochore KNL1 complex that serves as a docking point for spindle assembly checkpoint components and mediates microtubule-kinetochore interactions. Kinetochores, consisting of a centromere-associated inner segment and a microtubule-contacting outer segment, play a crucial role in chromosome segregation by mediating the physical connection between centromeric DNA and spindle microtubules. The outer kinetochore is made up of the ten-subunit KMN network, comprising the MIS12, NDC80 and KNL1 complexes, and auxiliary microtubule-associated components; together they connect the outer kinetochore with the inner kinetochore, bind microtubules, and mediate interactions with mitotic checkpoint proteins that delay anaphase until chromosomes are bioriented on the spindle. Targets the RZZ complex to the kinetochore at prometaphase. Recruits MAD2L1 to the kinetochore, but is not required for BUB1B localization. In addition to orienting mitotic chromosomes, it is also essential for alignment of homologous chromosomes during meiotic metaphase I. In meiosis I, required to activate the spindle assembly checkpoint at unattached kinetochores to correct erroneous kinetochore-microtubule attachments. This is Outer kinetochore KNL1 complex subunit ZWINT (Zwint) from Mus musculus (Mouse).